Reading from the N-terminus, the 388-residue chain is MFAKGKGSAVPSDGQAREKLALYVYEYLLHVGAQKSAQTFLSEIRWEKNITLGEPPGFLHSWWCVFWDLYCAAPERRDTCEHSSEAKAFHDYSAAAAPSPVLGNIPPNDGMPGGPIPPGFFQGPPGSQPSPHAQPPPHNPSSMMGPHSQPFMSPRYAGGPRPPIRMGNQPPGGVPGTQPLLPNSMDPTRQQGHPNMGGSMQRMNPPRGMGPMGPGPQNYGSGMRPPPNSLGPAMPGINMGPGAGRPWPNPNSANSIPYSSSSPGTYVGPPGGGGPPGTPIMPSPADSTNSSDNIYTMINPVPPGGSRSNFPMGPGSDGPMGGMGGMEPHHMNGSLGSGDIDGLPKNSPNNISGISNPPGTPRDDGELGGNFLHSFQNDNYSPSMTMSV.

Met1 bears the N-acetylmethionine mark. The region spanning 16-48 is the LisH domain; it reads AREKLALYVYEYLLHVGAQKSAQTFLSEIRWEK. The segment at 101–388 is disordered; it reads VLGNIPPNDG…NYSPSMTMSV (288 aa). A compositionally biased stretch (pro residues) spans 126-139; sequence GSQPSPHAQPPPHN. Arg155, Arg161, and Arg165 each carry asymmetric dimethylarginine. 2 stretches are compositionally biased toward low complexity: residues 200–209 and 250–268; these read MQRMNPPRGM and PNSANSIPYSSSSPGTYVG. Residues 272–282 are compositionally biased toward pro residues; it reads GGGPPGTPIMP. The span at 285-296 shows a compositional bias: polar residues; that stretch reads ADSTNSSDNIYT. The span at 315 to 325 shows a compositional bias: gly residues; it reads GSDGPMGGMGG. Over residues 346–357 the composition is skewed to low complexity; the sequence is NSPNNISGISNP. Phosphoserine occurs at positions 347, 352, and 355. Thr360 carries the phosphothreonine modification. Residues 373 to 388 are compositionally biased toward polar residues; it reads HSFQNDNYSPSMTMSV. Phosphoserine occurs at positions 381 and 387.

Highly expressed in all hematopoietic tissues, including spleen, lymph node, peripheral blood, bone marrow, thymus, and fetal liver, with highest expression in thymus and fetal liver. Expression is also high in heart, brain, kidney, and skeletal muscle.

The protein resides in the nucleus. May be involved in transcription regulation of the alpha 2(I) collagen gene where it binds to the single-stranded polypyrimidine sequences in the promoter region. This chain is Single-stranded DNA-binding protein 3 (SSBP3), found in Homo sapiens (Human).